Consider the following 296-residue polypeptide: Diguanylate cyclase DgcZ (296 aa).

Zn(2+)-binding residues include His-22, Cys-52, His-79, and His-83. A GGDEF domain is found at 157 to 289; that stretch reads LNLYLMLLDI…GRNRCMFIDE (133 aa). 2 residues coordinate Mg(2+): Asp-165 and Ile-166. Residues Asn-173, His-178, Asp-182, and 195–200 each bind substrate; that span reads WTRDYE. Position 208 (Glu-208) interacts with Mg(2+). The active-site Proton acceptor is Glu-208. Substrate-binding residues include Lys-215, Arg-224, and Arg-228.

As to quaternary structure, homodimer. The cofactor is Mg(2+).

It carries out the reaction 2 GTP = 3',3'-c-di-GMP + 2 diphosphate. It participates in purine metabolism; 3',5'-cyclic di-GMP biosynthesis. Its activity is regulated as follows. Allosterically regulated by zinc, which seems to regulate the activity of the catalytic GGDEF domains by impeding their mobility and thus preventing productive encounter of the two GTP substrates. Subject to product inhibition by c-di-GMP at a KI of 44 uM. Catalyzes the synthesis of cyclic-di-GMP (c-di-GMP) via the condensation of 2 GTP molecules. May act as a zinc sensor that controls, via c-di-GMP, post-translational events. Overexpression leads to a strong repression of swimming; swimming returnes to normal when residues 206-207 are both mutated to Ala. Overexpression also leads to a reduction in flagellar abundance and a 20-fold increase in c-di-GMP levels in vivo. Required for aminoglycoside-mediated induction of biofilm formation, it also plays a lesser role in biofilm production in response to other classes of translation inhibitors. The c-di-GMP produced by this enzyme up-regulates poly-GlcNAc production as well as the biofilm synthesis protein PgaD, although c-di-GMP is probably not the main inducing principle. C-di-GMP is a second messenger which controls cell surface-associated traits in bacteria. The chain is Diguanylate cyclase DgcZ from Escherichia coli (strain K12).